The sequence spans 632 residues: tRNA uridine 5-carboxymethylaminomethyl modification enzyme MnmG (632 aa).

G14 to G19 is a binding site for FAD. G273–F287 contacts NAD(+).

Belongs to the MnmG family. In terms of assembly, homodimer. Heterotetramer of two MnmE and two MnmG subunits. Requires FAD as cofactor.

The protein localises to the cytoplasm. Its function is as follows. NAD-binding protein involved in the addition of a carboxymethylaminomethyl (cmnm) group at the wobble position (U34) of certain tRNAs, forming tRNA-cmnm(5)s(2)U34. The polypeptide is tRNA uridine 5-carboxymethylaminomethyl modification enzyme MnmG (Clostridium novyi (strain NT)).